The following is a 350-amino-acid chain: Ferredoxin--NADP reductase (350 aa).

FAD-binding residues include threonine 22, glutamate 41, glutamine 49, tyrosine 54, valine 94, phenylalanine 129, aspartate 295, and serine 336.

It belongs to the ferredoxin--NADP reductase type 2 family. Homodimer. The cofactor is FAD.

The catalysed reaction is 2 reduced [2Fe-2S]-[ferredoxin] + NADP(+) + H(+) = 2 oxidized [2Fe-2S]-[ferredoxin] + NADPH. This chain is Ferredoxin--NADP reductase, found in Chlorobium luteolum (strain DSM 273 / BCRC 81028 / 2530) (Pelodictyon luteolum).